We begin with the raw amino-acid sequence, 200 residues long: Ephrin-A2 (200 aa).

Residues 1–22 form the signal peptide; sequence MPRWEAAALLAAIVGVCVWSDD. The region spanning 28–161 is the Ephrin RBD domain; sequence SDRYAVYWNR…KLKVYVRPTN (134 aa). Asn36 is a glycosylation site (N-linked (GlcNAc...) asparagine). Intrachain disulfides connect Cys61–Cys101 and Cys89–Cys150. Residues Asn161 and Asn175 are each glycosylated (N-linked (GlcNAc...) asparagine). Asn175 carries the GPI-anchor amidated asparagine lipid modification. The propeptide at 176–200 is removed in mature form; sequence NSCCSLAVPRAVLVAAPVFWTLLGS.

This sequence belongs to the ephrin family. Binds to the receptor tyrosine kinases EPHA3, EPHA4 and EPHA5. Interacts with EPHA8; activates EPHA8. In terms of tissue distribution, expressed in a gradient across the tectum being more strongly expressed at the posterior pole.

It is found in the cell membrane. Its function is as follows. Cell surface GPI-bound ligand for Eph receptors, a family of receptor tyrosine kinases which are crucial for migration, repulsion and adhesion during neuronal, vascular and epithelial development. Binds promiscuously Eph receptors residing on adjacent cells, leading to contact-dependent bidirectional signaling into neighboring cells. The signaling pathway downstream of the receptor is referred to as forward signaling while the signaling pathway downstream of the ephrin ligand is referred to as reverse signaling. With the EPHA2 receptor may play a role in bone remodeling through regulation of osteoclastogenesis and osteoblastogenesis. The polypeptide is Ephrin-A2 (EFNA2) (Gallus gallus (Chicken)).